Here is a 354-residue protein sequence, read N- to C-terminus: Ferredoxin--NADP reductase, chloroplastic (354 aa).

The N-terminal 35 residues, 1 to 35 (MASLRKPSNHADRACSRRLRVATRVAGRRMCRPVA), are a transit peptide targeting the chloroplast. Residues 69-198 (KAPFKAKVRS…TGPTGKVLLL (130 aa)) enclose the FAD-binding FR-type domain. Residues Lys118 and Lys124 each carry the N6,N6,N6-trimethyllysine modification. FAD-binding positions include 130 to 133 (RLYS), 151 to 153 (CVR), and Tyr157. NADP(+)-binding residues include Ser133 and Arg153. N6,N6-dimethyllysine is present on Lys170. Residues 172-174 (LCS) and Thr213 contribute to the FAD site. Residues Thr213, 245–246 (VG), 275–276 (SR), Lys285, 313–314 (GL), and Glu352 contribute to the NADP(+) site.

It belongs to the ferredoxin--NADP reductase type 1 family. Requires FAD as cofactor.

It is found in the plastid. The protein localises to the chloroplast stroma. It localises to the chloroplast thylakoid membrane. The enzyme catalyses 2 reduced [2Fe-2S]-[ferredoxin] + NADP(+) + H(+) = 2 oxidized [2Fe-2S]-[ferredoxin] + NADPH. Its pathway is energy metabolism; photosynthesis. Functionally, may play a key role in regulating the relative amounts of cyclic and non-cyclic electron flow to meet the demands of the plant for ATP and reducing power. This chain is Ferredoxin--NADP reductase, chloroplastic (PETH), found in Chlamydomonas reinhardtii (Chlamydomonas smithii).